The sequence spans 144 residues: Virulence protein STM3117 (144 aa).

Residues 23-143 (RIDHLVLTVS…DGNLIEISQY (121 aa)) form the VOC domain.

Functionally, is critically involved in promoting the replication of S.typhimurium cells inside host macrophages, suggesting a role in the establishment of bacterial colonization within macrophages. May be involved in the biosynthesis and modification of the peptidoglycan layer of the cell wall. This is Virulence protein STM3117 from Salmonella typhimurium (strain LT2 / SGSC1412 / ATCC 700720).